The chain runs to 691 residues: DNA ligase (691 aa).

Residues 53–57, 102–103, and Glu-135 contribute to the NAD(+) site; these read DSEYD and SL. Lys-137 functions as the N6-AMP-lysine intermediate in the catalytic mechanism. NAD(+)-binding residues include Arg-158, Glu-195, Lys-310, and Lys-334. Residues Cys-428, Cys-431, Cys-446, and Cys-452 each contribute to the Zn(2+) site. The region spanning 613–691 is the BRCT domain; that stretch reads SEGLPLDGQT…EEEFLVLVGE (79 aa).

The protein belongs to the NAD-dependent DNA ligase family. LigA subfamily. Requires Mg(2+) as cofactor. It depends on Mn(2+) as a cofactor.

The enzyme catalyses NAD(+) + (deoxyribonucleotide)n-3'-hydroxyl + 5'-phospho-(deoxyribonucleotide)m = (deoxyribonucleotide)n+m + AMP + beta-nicotinamide D-nucleotide.. In terms of biological role, DNA ligase that catalyzes the formation of phosphodiester linkages between 5'-phosphoryl and 3'-hydroxyl groups in double-stranded DNA using NAD as a coenzyme and as the energy source for the reaction. It is essential for DNA replication and repair of damaged DNA. The protein is DNA ligase of Psychrobacter cryohalolentis (strain ATCC BAA-1226 / DSM 17306 / VKM B-2378 / K5).